A 74-amino-acid polypeptide reads, in one-letter code: uncharacterized protein (74 aa).

Disordered regions lie at residues 1–26 (MNGP…SGVF) and 46–74 (ITNS…SFTQ). The helical transmembrane segment at 34–50 (VSNKSIMLISLKITNSP) threads the bilayer. The span at 47–74 (TNSPNSNSRGSSSSSSTSKSSSKTSFTQ) shows a compositional bias: low complexity.

The protein localises to the membrane. This is an uncharacterized protein from Dictyostelium discoideum (Social amoeba).